The sequence spans 226 residues: Cytidylate kinase (226 aa).

12-20 serves as a coordination point for ATP; it reads GPSGAGKGT.

The protein belongs to the cytidylate kinase family. Type 1 subfamily.

The protein resides in the cytoplasm. The enzyme catalyses CMP + ATP = CDP + ADP. The catalysed reaction is dCMP + ATP = dCDP + ADP. This is Cytidylate kinase from Colwellia psychrerythraea (strain 34H / ATCC BAA-681) (Vibrio psychroerythus).